The following is a 512-amino-acid chain: Ferrochelatase-2, chloroplastic (512 aa).

A disordered region spans residues 1-32 (MNCPAMTASPSSSSSSSYSTFRPPPPLLPQLS). A chloroplast-targeting transit peptide spans 1–83 (MNCPAMTASP…SNPLNISSSS (83 aa)). Over residues 9 to 21 (SPSSSSSSSYSTF) the composition is skewed to low complexity. Val-84 is subject to N-acetylvaline.

The protein belongs to the ferrochelatase family. In terms of tissue distribution, expressed in leaves and flowers.

It is found in the plastid. The protein localises to the chloroplast membrane. Its subcellular location is the chloroplast thylakoid membrane. It catalyses the reaction heme b + 2 H(+) = protoporphyrin IX + Fe(2+). Its pathway is porphyrin-containing compound metabolism; protoheme biosynthesis; protoheme from protoporphyrin-IX: step 1/1. Catalyzes the last step of heme biosynthesis by inserting ferrous iron into protoporphyrin IX to produce protoheme. Produces heme for photosynthetic cytochromes, and for proteins involved in abiotic and biotic stress responses. May play a role in the quality control of individual chloroplasts during photo-oxidative stress through regulation of heme biosynthesis. This is Ferrochelatase-2, chloroplastic from Arabidopsis thaliana (Mouse-ear cress).